We begin with the raw amino-acid sequence, 175 residues long: MLENPLIQQVLFEIMDEDVVGFDVLSVLINTNEVTDDEISRQLDVKLNNIRRILYKLYEARLVDYNREKDEETNWYTYTWKPSLEKVPALVAKKMKNVLNGLKEQLNVEENNMFFFCSDCEIKFTFEDAMDSGFRCPQCGEMMYEYDNKKDISLLKEQIKYLEDEFNKNPLFSTY.

The HTH TFE/IIEalpha-type domain maps to 3–88; it reads ENPLIQQVLF…TWKPSLEKVP (86 aa).

This sequence belongs to the TFE family. Monomer. Interaction with RNA polymerase subunits RpoF and RpoE is necessary for Tfe stimulatory transcription activity. Able to interact with Tbp and RNA polymerase in the absence of DNA promoter. Interacts both with the preinitiation and elongation complexes.

In terms of biological role, transcription factor that plays a role in the activation of archaeal genes transcribed by RNA polymerase. Facilitates transcription initiation by enhancing TATA-box recognition by TATA-box-binding protein (Tbp), and transcription factor B (Tfb) and RNA polymerase recruitment. Not absolutely required for transcription in vitro, but particularly important in cases where Tbp or Tfb function is not optimal. It dynamically alters the nucleic acid-binding properties of RNA polymerases by stabilizing the initiation complex and destabilizing elongation complexes. Seems to translocate with the RNA polymerase following initiation and acts by binding to the non template strand of the transcription bubble in elongation complexes. In Methanococcus maripaludis (strain DSM 14266 / JCM 13030 / NBRC 101832 / S2 / LL), this protein is Transcription factor E.